A 66-amino-acid polypeptide reads, in one-letter code: Small ribosomal subunit protein bS21 (66 aa).

This sequence belongs to the bacterial ribosomal protein bS21 family.

The chain is Small ribosomal subunit protein bS21 from Rickettsia africae (strain ESF-5).